The following is a 274-amino-acid chain: MEIRERILADMQVAETIDAHEEIRKSVEFLKAYLKKNTFLKSFVLGISGGQDSTLTGKLAQMAISELRAETGDDEYQFFAVSLPYGTQLDESDRQDALDFMAPDNRLTVNIKASVDASVAALAEAGVELSDFAKGNEKARERMKVQYAIAAMHKGVVVGTDHSAEAVTGFYTKYGDGGTDINPLFRLNKRQGKALLKELGCPEHLYLKKPTADLEDNKPALPDEVALGVTYDQIDDYLEGKEVPADAAAKIENWFIKTEHKRHMAITIFDDFWK.

ATP is bound at residue 46–53 (GISGGQDS). Asp-52 serves as a coordination point for Mg(2+). Deamido-NAD(+) is bound at residue Arg-140. Thr-160 provides a ligand contact to ATP. Mg(2+) is bound at residue Glu-165. Residues Lys-173 and Asp-180 each coordinate deamido-NAD(+). Lys-189 and Thr-211 together coordinate ATP. Position 260–261 (260–261 (HK)) interacts with deamido-NAD(+).

The protein belongs to the NAD synthetase family. Homodimer.

The catalysed reaction is deamido-NAD(+) + NH4(+) + ATP = AMP + diphosphate + NAD(+) + H(+). It functions in the pathway cofactor biosynthesis; NAD(+) biosynthesis; NAD(+) from deamido-NAD(+) (ammonia route): step 1/1. In terms of biological role, catalyzes the ATP-dependent amidation of deamido-NAD to form NAD. Uses ammonia as a nitrogen source. In Listeria innocua serovar 6a (strain ATCC BAA-680 / CLIP 11262), this protein is NH(3)-dependent NAD(+) synthetase.